We begin with the raw amino-acid sequence, 311 residues long: Phosphoribosylaminoimidazole-succinocarboxamide synthase (311 aa).

Belongs to the SAICAR synthetase family.

It carries out the reaction 5-amino-1-(5-phospho-D-ribosyl)imidazole-4-carboxylate + L-aspartate + ATP = (2S)-2-[5-amino-1-(5-phospho-beta-D-ribosyl)imidazole-4-carboxamido]succinate + ADP + phosphate + 2 H(+). It participates in purine metabolism; IMP biosynthesis via de novo pathway; 5-amino-1-(5-phospho-D-ribosyl)imidazole-4-carboxamide from 5-amino-1-(5-phospho-D-ribosyl)imidazole-4-carboxylate: step 1/2. This chain is Phosphoribosylaminoimidazole-succinocarboxamide synthase, found in Aromatoleum aromaticum (strain DSM 19018 / LMG 30748 / EbN1) (Azoarcus sp. (strain EbN1)).